Reading from the N-terminus, the 432-residue chain is Gamma-glutamyl phosphate reductase (432 aa).

Belongs to the gamma-glutamyl phosphate reductase family.

The protein localises to the cytoplasm. It catalyses the reaction L-glutamate 5-semialdehyde + phosphate + NADP(+) = L-glutamyl 5-phosphate + NADPH + H(+). It participates in amino-acid biosynthesis; L-proline biosynthesis; L-glutamate 5-semialdehyde from L-glutamate: step 2/2. Its function is as follows. Catalyzes the NADPH-dependent reduction of L-glutamate 5-phosphate into L-glutamate 5-semialdehyde and phosphate. The product spontaneously undergoes cyclization to form 1-pyrroline-5-carboxylate. The chain is Gamma-glutamyl phosphate reductase from Methylorubrum extorquens (strain CM4 / NCIMB 13688) (Methylobacterium extorquens).